The sequence spans 164 residues: Probable Brix domain-containing ribosomal biogenesis protein (164 aa).

The 164-residue stretch at 1–164 (MIITTSRKPS…IKTVKILDIE (164 aa)) folds into the Brix domain.

Functionally, probably involved in the biogenesis of the ribosome. The sequence is that of Probable Brix domain-containing ribosomal biogenesis protein from Methanococcus maripaludis (strain DSM 14266 / JCM 13030 / NBRC 101832 / S2 / LL).